The chain runs to 393 residues: Ig heavy chain C region (393 aa).

Ig-like domains follow at residues 63–157, 168–260, and 270–370; these read PTVI…RNIT, PVIK…ASIH, and PSVS…RTVN. N-linked (GlcNAc...) asparagine glycans are attached at residues asparagine 119, asparagine 155, asparagine 200, asparagine 230, asparagine 329, asparagine 366, asparagine 370, and asparagine 380.

This chain is Ig heavy chain C region, found in Heterodontus francisci (Horn shark).